The sequence spans 646 residues: Serine/threonine-protein kinase sck2 (646 aa).

Disordered regions lie at residues 17 to 85 and 143 to 176; these read VSTN…LPEV and GRDI…IQRT. Residues 68–80 show a composition bias toward polar residues; it reads SDQSTVGNRNSND. Over residues 149–165 the composition is skewed to low complexity; the sequence is SSRDSANVSRSSSMMSS. Residues 266 to 527 enclose the Protein kinase domain; sequence FVPLKLIGKG…VEEVMKHPFF (262 aa). Residues 272 to 280 and lysine 295 contribute to the ATP site; that span reads IGKGTFGQV. Aspartate 392 acts as the Proton acceptor in catalysis. In terms of domain architecture, AGC-kinase C-terminal spans 528-605; the sequence is DGIDWKKLAA…IDASAMDEAF (78 aa). A disordered region spans residues 609-646; sequence NSNDSASSISSQDDYSKDNSDMDLNRANDEVFMGQIDP. The span at 610–621 shows a compositional bias: low complexity; that stretch reads SNDSASSISSQD. The span at 622-637 shows a compositional bias: basic and acidic residues; the sequence is DYSKDNSDMDLNRAND.

This sequence belongs to the protein kinase superfamily. AGC Ser/Thr protein kinase family. PKC subfamily.

It carries out the reaction L-seryl-[protein] + ATP = O-phospho-L-seryl-[protein] + ADP + H(+). The enzyme catalyses L-threonyl-[protein] + ATP = O-phospho-L-threonyl-[protein] + ADP + H(+). Its function is as follows. Protein kinase that is part of growth control pathway which is at least partially redundant with the cAMP pathway. This Schizosaccharomyces pombe (strain 972 / ATCC 24843) (Fission yeast) protein is Serine/threonine-protein kinase sck2 (sck2).